A 187-amino-acid chain; its full sequence is Adenine phosphoribosyltransferase (187 aa).

It belongs to the purine/pyrimidine phosphoribosyltransferase family. In terms of assembly, homodimer.

The protein localises to the cytoplasm. The enzyme catalyses AMP + diphosphate = 5-phospho-alpha-D-ribose 1-diphosphate + adenine. It participates in purine metabolism; AMP biosynthesis via salvage pathway; AMP from adenine: step 1/1. Catalyzes a salvage reaction resulting in the formation of AMP, that is energically less costly than de novo synthesis. In Burkholderia pseudomallei (strain 1106a), this protein is Adenine phosphoribosyltransferase.